The sequence spans 437 residues: Triacylglycerol lipase (437 aa).

Residues 1 to 100 (MVSYVVALPE…AELANASLLQ (100 aa)) form the PE domain. Residues 101-206 (SEFASGIGNG…GNSPPPLLNS (106 aa)) form a linker region. Residues 207–437 (LLGQTVQYTT…QINQQLGIAA (231 aa)) are lipase. The Involved in the stabilization of the negatively charged intermediate by the formation of the oxyanion hole motif lies at 239-241 (HGG). Catalysis depends on residues Ser309, Asp383, and His413.

It in the N-terminal section; belongs to the mycobacterial PE family. PGRS subfamily. This sequence in the C-terminal section; belongs to the 'GDXG' lipolytic enzyme family. In terms of assembly, forms aggregates via its PE domain. In terms of processing, upon export, the PE domain is removed by proteolytic cleavage. Cleavage occurs at the cell surface and is not required for secretion. Cleaved after Gly-149 by the aspartic protease PecA. May also be cleaved before Leu-98 and after Ala-136.

Its subcellular location is the cytoplasm. It is found in the secreted. The protein resides in the cell wall. It localises to the cell surface. The enzyme catalyses a triacylglycerol + H2O = a diacylglycerol + a fatty acid + H(+). The catalysed reaction is 1,2,3-tri-(9Z-octadecenoyl)-glycerol + H2O = di-(9Z)-octadecenoylglycerol + (9Z)-octadecenoate + H(+). It carries out the reaction an acetyl ester + H2O = an aliphatic alcohol + acetate + H(+). It catalyses the reaction a butanoate ester + H2O = an aliphatic alcohol + butanoate + H(+). The enzyme catalyses a hexanoate ester + H2O = an aliphatic alcohol + hexanoate + H(+). The catalysed reaction is an octanoate ester + H2O = an aliphatic alcohol + octanoate + H(+). It carries out the reaction a dodecanoate ester + H2O = an aliphatic alcohol + dodecanoate + H(+). It catalyses the reaction a tetradecanoate ester + H2O = an aliphatic alcohol + tetradecanoate + H(+). The enzyme catalyses hexadecanoate ester + H2O = an aliphatic alcohol + hexadecanoate + H(+). The catalysed reaction is octadecanoate ester + H2O = an aliphatic alcohol + octadecanoate + H(+). It carries out the reaction 1-butyrylglycerol + H2O = butanoate + glycerol + H(+). It catalyses the reaction 1,2,3-tributanoylglycerol + H2O = dibutanoylglycerol + butanoate + H(+). PE domain down-regulates lipase activity. With respect to regulation, cleavage by PecA does not affect surface localization and lipase activity. Its activity is regulated as follows. Inhibited by diethyl-p-nitrophenyl phosphate (E-600) at 0.5 uM, by phenylmethanesulfonyl fluoride at 5 mM and by polyethylene glycol sorbitan monolaurate (Tween 20). Also inhibited by CaCl(2), CoCl(2), MnCl(2), ZnCl(2) and MgCl(2). Inhibited by several hydrazides compounds. Stimulated slightly by SDS at concentrations up to 2 mM, above which the activity is severely inhibited. Catalyzes the hydrolysis of both intracellular and extracellular triacylglycerol (TAG). In vitro, can also hydrolyze p-nitrophenyl (pNP) esters with various chain lengths, including pNP-acetate (C2), pNP-butyrate (C4), pNP-caproate (C6), pNP-caprylate (C8), pNP-laurate (C12), pNP-myristate (C14), pNP-palmitate (C16) and pNP-stearate (C18). Also hydrolyzes monobutyrin, tributyrin and trioctanoin. Overexpression results in increase of virulence characterized by reduced survival of infected mouse and increased burden of bacilli in the lungs. Hydrolyzes internal or host-derived TAG depending on its localization. Its function is as follows. Hydrolyzes TAG that accumulates within mycobacterial intracytosolic lipid inclusions (ILI). Probably responsible for the utilization of stored long-chain TAG during the dormancy and reactivation stages of the pathogen. In terms of biological role, hydrolyzes host-derived TAG. The sequence is that of Triacylglycerol lipase from Mycobacterium tuberculosis (strain ATCC 25618 / H37Rv).